The sequence spans 91 residues: Putative membrane protein insertion efficiency factor (91 aa).

Positions 66–91 (GGVDPVPSCGCHSDKETTPKEKSDNA) are disordered. Residues 77–91 (HSDKETTPKEKSDNA) are compositionally biased toward basic and acidic residues.

Belongs to the UPF0161 family.

The protein resides in the cell inner membrane. In terms of biological role, could be involved in insertion of integral membrane proteins into the membrane. The sequence is that of Putative membrane protein insertion efficiency factor from Hydrogenovibrio crunogenus (strain DSM 25203 / XCL-2) (Thiomicrospira crunogena).